The primary structure comprises 501 residues: Cobyric acid synthase (501 aa).

The region spanning 251–446 (NIDIAIIRLS…LHGIFDSEEF (196 aa)) is the GATase cobBQ-type domain. The active-site Nucleophile is the Cys332. The active site involves His438.

It belongs to the CobB/CobQ family. CobQ subfamily.

Its pathway is cofactor biosynthesis; adenosylcobalamin biosynthesis. Its function is as follows. Catalyzes amidations at positions B, D, E, and G on adenosylcobyrinic A,C-diamide. NH(2) groups are provided by glutamine, and one molecule of ATP is hydrogenolyzed for each amidation. The polypeptide is Cobyric acid synthase (Clostridium botulinum (strain Alaska E43 / Type E3)).